The following is an 85-amino-acid chain: Toxin CsE8 (85 aa).

A signal peptide spans 1 to 19 (MNSLLMITACLVLFGTVWS). Positions 20–83 (EKGYLVHEDT…TWPLIGKLCG (64 aa)) constitute an LCN-type CS-alpha/beta domain. 4 disulfides stabilise this stretch: Cys31–Cys82, Cys35–Cys58, Cys44–Cys63, and Cys48–Cys65. A Cysteine amide modification is found at Cys82.

The protein belongs to the long (4 C-C) scorpion toxin superfamily. Sodium channel inhibitor family. Beta subfamily. In terms of tissue distribution, expressed by the venom gland.

It is found in the secreted. Its function is as follows. Beta toxins bind voltage-independently at site-4 of sodium channels (Nav) and shift the voltage of activation toward more negative potentials thereby affecting sodium channel activation and promoting spontaneous and repetitive firing. This Centruroides sculpturatus (Arizona bark scorpion) protein is Toxin CsE8.